The sequence spans 173 residues: Lipoprotein signal peptidase (173 aa).

Helical transmembrane passes span 14-34, 44-64, 72-92, and 98-118; these read LAWLWLTVLIVAVDQVSKYYF, IIVIPDYFSWTLAYNTGAAFS, WQRWLFALIAVVVSAVLVVWL, and DDTWLAIALALVLGGALGNLY. Active-site residues include Asp-128 and Asp-147. Residues 139-159 traverse the membrane as a helical segment; that stretch reads YFPAFNVADSAITVGAIMLAL.

It belongs to the peptidase A8 family.

The protein localises to the cell inner membrane. It catalyses the reaction Release of signal peptides from bacterial membrane prolipoproteins. Hydrolyzes -Xaa-Yaa-Zaa-|-(S,diacylglyceryl)Cys-, in which Xaa is hydrophobic (preferably Leu), and Yaa (Ala or Ser) and Zaa (Gly or Ala) have small, neutral side chains.. The protein operates within protein modification; lipoprotein biosynthesis (signal peptide cleavage). Functionally, this protein specifically catalyzes the removal of signal peptides from prolipoproteins. This is Lipoprotein signal peptidase from Pseudomonas syringae pv. tomato (strain ATCC BAA-871 / DC3000).